Here is a 142-residue protein sequence, read N- to C-terminus: MAKKVTAQVKLQIPAGKATPAPPVGTALGPQGVNIMDFCKAYNAKTSGKDQEGLIIPVVITIYSDRSFTFITKTPPVPVLIKRAVAIAKGSPEPHKTKVGKITQAQVEEIAKIKLPDLNCFDLDAAMRSVRGTARSMGVDVV.

Belongs to the universal ribosomal protein uL11 family. As to quaternary structure, part of the ribosomal stalk of the 50S ribosomal subunit. Interacts with L10 and the large rRNA to form the base of the stalk. L10 forms an elongated spine to which L12 dimers bind in a sequential fashion forming a multimeric L10(L12)X complex. One or more lysine residues are methylated.

Forms part of the ribosomal stalk which helps the ribosome interact with GTP-bound translation factors. The protein is Large ribosomal subunit protein uL11 of Solibacter usitatus (strain Ellin6076).